We begin with the raw amino-acid sequence, 602 residues long: Elongation factor 4 (602 aa).

Residues 2 to 184 (DHIRNFSIIA…AVIARMPPPK (183 aa)) form the tr-type G domain. GTP is bound by residues 14–19 (DHGKST) and 131–134 (NKMD).

It belongs to the TRAFAC class translation factor GTPase superfamily. Classic translation factor GTPase family. LepA subfamily.

The protein localises to the cell inner membrane. The catalysed reaction is GTP + H2O = GDP + phosphate + H(+). Functionally, required for accurate and efficient protein synthesis under certain stress conditions. May act as a fidelity factor of the translation reaction, by catalyzing a one-codon backward translocation of tRNAs on improperly translocated ribosomes. Back-translocation proceeds from a post-translocation (POST) complex to a pre-translocation (PRE) complex, thus giving elongation factor G a second chance to translocate the tRNAs correctly. Binds to ribosomes in a GTP-dependent manner. This Leptothrix cholodnii (strain ATCC 51168 / LMG 8142 / SP-6) (Leptothrix discophora (strain SP-6)) protein is Elongation factor 4.